A 139-amino-acid chain; its full sequence is D-ribose pyranase (139 aa).

Histidine 20 acts as the Proton donor in catalysis. Substrate is bound by residues aspartate 28, histidine 106, and 128–130; that span reads YAN.

The protein belongs to the RbsD / FucU family. RbsD subfamily. As to quaternary structure, homodecamer.

The protein resides in the cytoplasm. The enzyme catalyses beta-D-ribopyranose = beta-D-ribofuranose. Its pathway is carbohydrate metabolism; D-ribose degradation; D-ribose 5-phosphate from beta-D-ribopyranose: step 1/2. Functionally, catalyzes the interconversion of beta-pyran and beta-furan forms of D-ribose. This Aliivibrio fischeri (strain ATCC 700601 / ES114) (Vibrio fischeri) protein is D-ribose pyranase.